We begin with the raw amino-acid sequence, 792 residues long: RNA-binding protein RRM4 (792 aa).

Residues 37 to 60 (TDSTAQASHAAEQTIDAHQQAGDV) are disordered. RRM domains are found at residues 72-145 (PLLY…QDAS), 154-235 (KPRL…IDTA), and 321-398 (CNLF…LHEP). Residues 412-424 (AANADNSDMSSNS) are compositionally biased toward low complexity. Disordered stretches follow at residues 412-438 (AANADNSDMSSNSPPTEARKADKRQSR) and 630-649 (DESGEDLSPPRASSGSAPVP). A compositionally biased stretch (polar residues) spans 640–649 (RASSGSAPVP). Residues 715–792 (ATDDFIDSLQ…QHKVAAGLNK (78 aa)) form the PABC domain.

This sequence belongs to the polyadenylate-binding protein type-1 family. Part of large ribonucleoprotein complexes (mRNPs) containing RNA-binding proteins RRM4 and PAB1, endosome-binding protein UPA1, core scaffold protein UPA2 and associated factor GRP1. Interacts (via PABC domain) with UPA1 (via PAM2 domain).

The protein resides in the cytoplasm. The protein localises to the cytoskeleton. It localises to the endosome. Functionally, key RNA-binding protein involved in the formation of polar-growing hyphae which is essential for infection by the plant pathogen. During filamentation, assembles into particles that shuttle bidirectionally along microtubules to both poles. The RRM4 transport particles are part of the endosomal mRNP transport that regulates polarity of the infectious hyphae by transporting distinct mRNAs encoding, for example, the ubiquitin fusion protein UBI1, the small G protein RHO3, or the septin CDC3, from the nucleus to cell poles. Recognizes a broad spectrum of cargo mRNAs and precisely binds at stop codons, which constitute landmark sites of translation, suggesting an intimate connection of mRNA transport and translation. Also binds to the specific binding motif UAUG of cargo mRNAs via its third RRM. Plus-end-directed KIN3, a kinesin-3 type motor, mediates anterograde transport of RRM4-containing mRNPs whereas split dynein DYM1-DYN2 functions in retrograde movement of mRNPs. The chain is RNA-binding protein RRM4 from Mycosarcoma maydis (Corn smut fungus).